The sequence spans 110 residues: Ribonuclease (110 aa).

Glu-73 acts as the Proton acceptor in catalysis. His-102 functions as the Proton donor in the catalytic mechanism.

This sequence belongs to the ribonuclease N1/T1 family.

The protein localises to the secreted. Its function is as follows. Hydrolyzes phosphodiester bonds in RNA, poly- and oligoribonucleotides resulting in 3'-nucleoside monophosphates via 2',3'-cyclophosphate intermediates. The chain is Ribonuclease from Niallia circulans (Bacillus circulans).